Here is a 142-residue protein sequence, read N- to C-terminus: Universal stress protein C (142 aa).

Belongs to the universal stress protein A family.

It localises to the cytoplasm. Functionally, required for resistance to DNA-damaging agents. The sequence is that of Universal stress protein C (uspC) from Salmonella typhimurium (strain LT2 / SGSC1412 / ATCC 700720).